Here is a 338-residue protein sequence, read N- to C-terminus: MDSTRLPVIFLMGPTASGKTDLAMRLREHLPVELISVDSTLVYRGMDIGTAKPSPEELAAAPHRLIDIRDPAEPYSVADFLVDAEREISAIHRQGNIPLLVGGTMLYFRALLDGLAQMPAADTSVRAQIEADAAQFGWPYVHQQLAEVDPDVAADIHPNHSQRVSRALEVYRVSGKTMTQLRREQQASGDVRAFEDRYCVRQIAISPRDRAILHQRIEQRFHAMLAQGLVEEVRRLYQRGDLHTDLPAIRAVGYRQVWDYLDDKLHYDEMVARGIIATRQLAKRQFTWLRGWMTNEGARSTSENSQLHWLYTETEQGKPLAKEEIVRCALNFLKPTAI.

ATP is bound at residue 13–20 (GPTASGKT). Position 15–20 (15–20 (TASGKT)) interacts with substrate. Interaction with substrate tRNA regions lie at residues 38–41 (DSTL) and 162–166 (QRVSR).

The protein belongs to the IPP transferase family. Monomer. Requires Mg(2+) as cofactor.

The catalysed reaction is adenosine(37) in tRNA + dimethylallyl diphosphate = N(6)-dimethylallyladenosine(37) in tRNA + diphosphate. Catalyzes the transfer of a dimethylallyl group onto the adenine at position 37 in tRNAs that read codons beginning with uridine, leading to the formation of N6-(dimethylallyl)adenosine (i(6)A). In Cellvibrio japonicus (strain Ueda107) (Pseudomonas fluorescens subsp. cellulosa), this protein is tRNA dimethylallyltransferase.